A 208-amino-acid polypeptide reads, in one-letter code: Small ribosomal subunit protein uS3 (208 aa).

Residues 16 to 85 (IDEYFKKELS…KPQIDVKPVE (70 aa)) enclose the KH type-2 domain.

This sequence belongs to the universal ribosomal protein uS3 family. In terms of assembly, part of the 30S ribosomal subunit.

In terms of biological role, binds the lower part of the 30S subunit head. The chain is Small ribosomal subunit protein uS3 from Methanocaldococcus jannaschii (strain ATCC 43067 / DSM 2661 / JAL-1 / JCM 10045 / NBRC 100440) (Methanococcus jannaschii).